Reading from the N-terminus, the 394-residue chain is Elongation factor Tu (394 aa).

The tr-type G domain maps to 10 to 204 (KPHINVGTIG…HLDNYIPEPK (195 aa)). A G1 region spans residues 19–26 (GHVDHGKT). 19-26 (GHVDHGKT) serves as a coordination point for GTP. Threonine 26 provides a ligand contact to Mg(2+). The G2 stretch occupies residues 60-64 (GITIN). A G3 region spans residues 81 to 84 (DCPG). GTP is bound by residues 81 to 85 (DCPGH) and 136 to 139 (NKCD). The segment at 136–139 (NKCD) is G4. The G5 stretch occupies residues 174 to 176 (SAL).

Belongs to the TRAFAC class translation factor GTPase superfamily. Classic translation factor GTPase family. EF-Tu/EF-1A subfamily. In terms of assembly, monomer.

It is found in the cytoplasm. The enzyme catalyses GTP + H2O = GDP + phosphate + H(+). GTP hydrolase that promotes the GTP-dependent binding of aminoacyl-tRNA to the A-site of ribosomes during protein biosynthesis. The sequence is that of Elongation factor Tu from Wigglesworthia glossinidia brevipalpis.